We begin with the raw amino-acid sequence, 456 residues long: UDP-N-acetylmuramoylalanine--D-glutamate ligase (456 aa).

122–128 (GSNGKST) serves as a coordination point for ATP.

The protein belongs to the MurCDEF family.

The protein resides in the cytoplasm. The enzyme catalyses UDP-N-acetyl-alpha-D-muramoyl-L-alanine + D-glutamate + ATP = UDP-N-acetyl-alpha-D-muramoyl-L-alanyl-D-glutamate + ADP + phosphate + H(+). It participates in cell wall biogenesis; peptidoglycan biosynthesis. Cell wall formation. Catalyzes the addition of glutamate to the nucleotide precursor UDP-N-acetylmuramoyl-L-alanine (UMA). The sequence is that of UDP-N-acetylmuramoylalanine--D-glutamate ligase from Saccharophagus degradans (strain 2-40 / ATCC 43961 / DSM 17024).